We begin with the raw amino-acid sequence, 439 residues long: ATP-dependent protease ATPase subunit HslU (439 aa).

Residues Ile17, 59–64, Asp251, Glu317, and Arg389 contribute to the ATP site; that span reads GVGKTE.

Belongs to the ClpX chaperone family. HslU subfamily. In terms of assembly, a double ring-shaped homohexamer of HslV is capped on each side by a ring-shaped HslU homohexamer. The assembly of the HslU/HslV complex is dependent on binding of ATP.

Its subcellular location is the cytoplasm. ATPase subunit of a proteasome-like degradation complex; this subunit has chaperone activity. The binding of ATP and its subsequent hydrolysis by HslU are essential for unfolding of protein substrates subsequently hydrolyzed by HslV. HslU recognizes the N-terminal part of its protein substrates and unfolds these before they are guided to HslV for hydrolysis. The protein is ATP-dependent protease ATPase subunit HslU of Campylobacter jejuni subsp. jejuni serotype O:6 (strain 81116 / NCTC 11828).